A 129-amino-acid polypeptide reads, in one-letter code: Large ribosomal subunit protein uL22 (129 aa).

The protein belongs to the universal ribosomal protein uL22 family. Part of the 50S ribosomal subunit.

Its function is as follows. This protein binds specifically to 23S rRNA; its binding is stimulated by other ribosomal proteins, e.g. L4, L17, and L20. It is important during the early stages of 50S assembly. It makes multiple contacts with different domains of the 23S rRNA in the assembled 50S subunit and ribosome. Functionally, the globular domain of the protein is located near the polypeptide exit tunnel on the outside of the subunit, while an extended beta-hairpin is found that lines the wall of the exit tunnel in the center of the 70S ribosome. This Aster yellows witches'-broom phytoplasma (strain AYWB) protein is Large ribosomal subunit protein uL22.